We begin with the raw amino-acid sequence, 507 residues long: Arabinose import ATP-binding protein AraG (507 aa).

ABC transporter domains are found at residues leucine 14–arginine 249 and arginine 249–threonine 505. Glycine 46 to serine 53 contacts ATP.

The protein belongs to the ABC transporter superfamily. Arabinose importer (TC 3.A.1.2.2) family. The complex is composed of two ATP-binding proteins (AraG), two transmembrane proteins (AraH) and a solute-binding protein (AraF).

Its subcellular location is the cell inner membrane. The catalysed reaction is L-arabinose(out) + ATP + H2O = L-arabinose(in) + ADP + phosphate + H(+). Its function is as follows. Part of the ABC transporter complex AraFGH involved in arabinose import. Responsible for energy coupling to the transport system. The polypeptide is Arabinose import ATP-binding protein AraG (Pseudomonas syringae pv. tomato (strain ATCC BAA-871 / DC3000)).